The primary structure comprises 180 residues: Putative pre-16S rRNA nuclease (180 aa).

Residues 1-12 show a composition bias toward basic and acidic residues; the sequence is MDAQERSERPDP. Residues 1–23 form a disordered region; the sequence is MDAQERSERPDPATDPGRGRRLG.

This sequence belongs to the YqgF nuclease family.

The protein resides in the cytoplasm. In terms of biological role, could be a nuclease involved in processing of the 5'-end of pre-16S rRNA. The chain is Putative pre-16S rRNA nuclease from Nocardia farcinica (strain IFM 10152).